The chain runs to 1914 residues: Zinc finger protein Rlf (1914 aa).

S41 bears the Phosphoserine mark. A compositionally biased stretch (basic and acidic residues) spans 521-540; sequence KQYRRRDLTDQHKEKRDKKP. The tract at residues 521–541 is disordered; it reads KQYRRRDLTDQHKEKRDKKPI. The C2H2-type 1 zinc finger occupies 582-604; it reads YTCPVCIKKFKRKEMFVPHVMEH. K622 is covalently cross-linked (Glycyl lysine isopeptide (Lys-Gly) (interchain with G-Cter in SUMO2)). S632 and S634 each carry phosphoserine. C2H2-type zinc fingers lie at residues 671-696, 714-736, 742-766, 771-795, and 801-825; these read YPCP…KAEH, EKCT…EQVH, YMCV…KQKH, YKCE…EAQH, and YTCN…LSMH. Residue K839 forms a Glycyl lysine isopeptide (Lys-Gly) (interchain with G-Cter in SUMO2) linkage. Residues 882 to 907 are disordered; it reads TETAENLKENSDSNSSDQLSHSSSAS. Low complexity predominate over residues 893–907; sequence DSNSSDQLSHSSSAS. The C2H2-type 7 zinc-finger motif lies at 954 to 979; the sequence is FTCGFDGCGSTYKNARGMQKHLRKVH. The interval 993-1028 is disordered; that stretch reads LFPSLGNEHNQTTEKLDAEPKPCSDTNSDSPDEGLD. A compositionally biased stretch (basic and acidic residues) spans 1003 to 1014; sequence QTTEKLDAEPKP. 2 C2H2-type zinc fingers span residues 1127 to 1152 and 1172 to 1195; these read FFCE…LKKH and FQCH…KNKH. The interval 1231–1290 is disordered; it reads LGGDPSSNSEKPHCHPKKDECSSETDLESSCEETESKTSDISSPIGSHREEQEGREGRGS. The segment covering 1240 to 1251 has biased composition (basic and acidic residues); the sequence is EKPHCHPKKDEC. The segment covering 1252-1263 has biased composition (acidic residues); that stretch reads SSETDLESSCEE. The segment covering 1277-1289 has biased composition (basic and acidic residues); sequence SHREEQEGREGRG. C2H2-type zinc fingers lie at residues 1310–1335, 1362–1387, 1407–1432, 1444–1469, and 1549–1574; these read FHCI…RTVH, FACK…SDSH, FSCN…MEQH, IHCD…YYRH, and YPCM…KRTH. K1423 participates in a covalent cross-link: Glycyl lysine isopeptide (Lys-Gly) (interchain with G-Cter in SUMO2). Residues K1599 and K1611 each participate in a glycyl lysine isopeptide (Lys-Gly) (interchain with G-Cter in SUMO2) cross-link. Residues 1620–1654 form a disordered region; it reads SERTEHSHSPGDSSAPIQNTDCCHSSERDGGQKGC. A compositionally biased stretch (polar residues) spans 1629–1642; sequence PGDSSAPIQNTDCC. Residue K1696 forms a Glycyl lysine isopeptide (Lys-Gly) (interchain with G-Cter in SUMO2) linkage. Residues 1725 to 1757 form a disordered region; the sequence is ESETRQHSSGQENTVKNPTHVPKENFRKHSQPR. The segment covering 1731 to 1741 has biased composition (polar residues); that stretch reads HSSGQENTVKN. K1762 participates in a covalent cross-link: Glycyl lysine isopeptide (Lys-Gly) (interchain with G-Cter in SUMO2). Residues 1783–1807 are disordered; the sequence is KEDDFDDWEPSEHLTLSNSSQSSND. Positions 1796–1807 are enriched in polar residues; sequence LTLSNSSQSSND.

This sequence belongs to the krueppel C2H2-type zinc-finger protein family. As to quaternary structure, interacts with RIT1 and RIT2. In terms of tissue distribution, widely expressed in fetal and adult tissues.

The protein localises to the nucleus. Functionally, may be involved in transcriptional regulation. The protein is Zinc finger protein Rlf (RLF) of Homo sapiens (Human).